The sequence spans 533 residues: Homeobox protein DTH-1 (533 aa).

2 disordered regions span residues 1–28 (MSSN…NECP) and 308–378 (LPQN…GKKR). Basic and acidic residues predominate over residues 8–19 (VKYDTNFDREGY). Low complexity predominate over residues 308 to 317 (LPQNLPNPNQ). The span at 318-333 (TDSIYSSSINENNQPI) shows a compositional bias: polar residues. Over residues 360-371 (SVENNDNENSSS) the composition is skewed to low complexity. Positions 377 to 436 (KRKRRVLFSKKQILELERHFRQKKYLSAPEREHLANLIGLSPTQVKIWFQNHRYKMKRAH) form a DNA-binding region, homeobox.

It belongs to the NK-2 homeobox family. As to expression, intestine and unidentified peripheral parenchymal cells. Slightly higher levels in the cephalic region compared to other body regions.

It localises to the nucleus. This protein might be involved in determination and/or differentiation of nerve cells in the continuous replacement of neurons in the cephalic region. This Girardia tigrina (Planarian) protein is Homeobox protein DTH-1 (DTH-1).